We begin with the raw amino-acid sequence, 519 residues long: MQFSSVFPLEGKACVSPIRRGGEGSASDRLKIGDSSSIKHDRAVRRMCLGYRGTKNGAQCVLTSDAGPDTLHVRTSFRRNFADPNEVAAVILGGGTGTQLFPLTSTRATPAVPIGGCYRLIDIPMSNCFNSGINKIFIMTQFNSASLNRHIHRTYLGGGINFTDGSVEVLAATQMPGEAAGWFQGTADAVRKFIWVLEDYYKHKAIEHILILSGDQLYRMDYMELVQKHVDDNADITLSCAPVGESRASDYGLVKFDSSGRVIQFSEKPKGTDLEAMKVDTSFLNFAIDDPTKFPYIASMGVYVFKRDVLLNLLKSRYAELHDFGSEILPRALHEHNVQAYVFADYWEDIGTIRSFFDANMALCEQPPKFEFYDPKTPFFTSPRYLPPTKSDKCRIKDAIISHGCFLRECTIEHSIVGVRSRLNSACELKNTMMMGADLYETEDEISRLLSEGKVPIGVGENTKINNCIIDMNARVGRNVVITNSEGVQESDRPEEGYYIRSGIVVILKNATIKDGKVI.

The N-terminal 74 residues, 1 to 74 (MQFSSVFPLE…DAGPDTLHVR (74 aa)), are a transit peptide targeting the chloroplast.

The protein belongs to the bacterial/plant glucose-1-phosphate adenylyltransferase family. Heterotetramer composed of two small and two large subunits. In terms of tissue distribution, expressed in stems.

The protein resides in the plastid. Its subcellular location is the chloroplast. It catalyses the reaction alpha-D-glucose 1-phosphate + ATP + H(+) = ADP-alpha-D-glucose + diphosphate. It functions in the pathway glycan biosynthesis; starch biosynthesis. Activated by 3'phosphoglycerate, inhibited by orthophosphate. Allosteric regulation. Functionally, involved in synthesis of starch. Catalyzes the synthesis of ADP-glucose, a molecule that serves as an activated glycosyl donor for alpha-1,4-glucan synthesis. Essential for starch synthesis in leaf chloroplasts. This chain is Glucose-1-phosphate adenylyltransferase large subunit 3, chloroplastic/amyloplastic, found in Oryza sativa subsp. japonica (Rice).